Reading from the N-terminus, the 248-residue chain is Probable uridine-cytidine kinase (248 aa).

Residue 15–23 participates in ATP binding; it reads GGTSCGKST. Residues Asp-73, Tyr-101, Arg-154, Arg-164, and Gln-172 each coordinate substrate. Asp-201 contacts ATP. The segment at 224 to 248 is disordered; that stretch reads SDEEEEKENELVKQGSFRRPFSRPH.

The protein belongs to the uridine kinase family.

It catalyses the reaction uridine + ATP = UMP + ADP + H(+). It carries out the reaction cytidine + ATP = CMP + ADP + H(+). It participates in pyrimidine metabolism; CTP biosynthesis via salvage pathway; CTP from cytidine: step 1/3. It functions in the pathway pyrimidine metabolism; UMP biosynthesis via salvage pathway; UMP from uridine: step 1/1. The chain is Probable uridine-cytidine kinase from Caenorhabditis elegans.